Consider the following 447-residue polypeptide: Keratin, type I cytoskeletal 15 (447 aa).

Positions 1-93 are head; it reads MATTFLQTSS…GGDGGLLSGN (93 aa). A phosphoserine mark is found at serine 16, serine 28, serine 33, and serine 47. Residues 94–129 are coil 1A; it reads EKVTMQNLNDRLASYLDKVRALEEANTELEVKIRDW. An IF rod domain is found at 94–406; sequence EKVTMQNLND…NLLEGQDAKM (313 aa). Threonine 120 carries the phosphothreonine modification. The segment at 130-148 is linker 1; that stretch reads YQKQSPASPDRDYSHYFKT. The coil 1B stretch occupies residues 149 to 240; sequence MEEIRDKILA…KNHEEEMKEF (92 aa). The linker 12 stretch occupies residues 241–260; the sequence is SSQLAGQVNVEMDAAPGVDL. The segment at 261–402 is coil 2; the sequence is TRMLAEMREQ…STYRNLLEGQ (142 aa). Lysine 289 is covalently cross-linked (Glycyl lysine isopeptide (Lys-Gly) (interchain with G-Cter in SUMO2)). Phosphothreonine occurs at positions 290 and 312. The tail stretch occupies residues 403–447; it reads DAKMAAIGVREASLRGGSSGGGSNFHISVEESVDGKVVSSRKRES. A Glycyl lysine isopeptide (Lys-Gly) (interchain with G-Cter in SUMO1); alternate cross-link involves residue lysine 438. Lysine 438 participates in a covalent cross-link: Glycyl lysine isopeptide (Lys-Gly) (interchain with G-Cter in SUMO2); alternate.

This sequence belongs to the intermediate filament family. Heterotetramer of two type I and two type II keratins. Forms a heterodimer with KRT14. Interacts with NOD2.

This is Keratin, type I cytoskeletal 15 from Rattus norvegicus (Rat).